A 107-amino-acid polypeptide reads, in one-letter code: Growth-regulated alpha protein (107 aa).

Positions 1-34 (MARAALSAAPSNPRLLRVALLLLLLVAAGRRAAG) are cleaved as a signal peptide. 2 cysteine pairs are disulfide-bonded: Cys43-Cys69 and Cys45-Cys85.

Belongs to the intercrine alpha (chemokine CxC) family. N-terminal processed forms GRO-alpha(4-73), GRO-alpha(5-73) and GRO-alpha(6-73) are produced by proteolytic cleavage after secretion from peripheral blood monocytes.

It is found in the secreted. Functionally, has chemotactic activity for neutrophils. May play a role in inflammation and exerts its effects on endothelial cells in an autocrine fashion. In vitro, the processed forms GRO-alpha(4-73), GRO-alpha(5-73) and GRO-alpha(6-73) show a 30-fold higher chemotactic activity. The protein is Growth-regulated alpha protein (CXCL1) of Homo sapiens (Human).